Reading from the N-terminus, the 192-residue chain is NAD(P)H-quinone oxidoreductase subunit J, organellar chromatophore (192 aa).

It belongs to the complex I 30 kDa subunit family. NDH is composed of at least 16 different subunits, 5 of which are encoded in the nucleus.

The protein localises to the plastid. The protein resides in the organellar chromatophore thylakoid membrane. The catalysed reaction is a quinone + NADH + H(+) = a quinol + NAD(+). NDH-1 shuttles electrons from NADH, via FMN and iron-sulfur (Fe-S) centers, to quinones in the respiratory chain. Couples the redox reaction to proton translocation (for every two electrons transferred, four hydrogen ions are translocated across the cytoplasmic membrane), and thus conserves the redox energy in a proton gradient. This chain is NAD(P)H-quinone oxidoreductase subunit J, organellar chromatophore, found in Paulinella chromatophora.